Here is a 427-residue protein sequence, read N- to C-terminus: Anhydro-N-acetylmuramic acid kinase (427 aa).

32–39 (GTSLDGMD) contributes to the ATP binding site.

The protein belongs to the anhydro-N-acetylmuramic acid kinase family.

The enzyme catalyses 1,6-anhydro-N-acetyl-beta-muramate + ATP + H2O = N-acetyl-D-muramate 6-phosphate + ADP + H(+). The protein operates within amino-sugar metabolism; 1,6-anhydro-N-acetylmuramate degradation. Its pathway is cell wall biogenesis; peptidoglycan recycling. Catalyzes the specific phosphorylation of 1,6-anhydro-N-acetylmuramic acid (anhMurNAc) with the simultaneous cleavage of the 1,6-anhydro ring, generating MurNAc-6-P. Is required for the utilization of anhMurNAc either imported from the medium or derived from its own cell wall murein, and thus plays a role in cell wall recycling. The sequence is that of Anhydro-N-acetylmuramic acid kinase from Psychrobacter cryohalolentis (strain ATCC BAA-1226 / DSM 17306 / VKM B-2378 / K5).